We begin with the raw amino-acid sequence, 294 residues long: MTKAVLTSISQLALKALLYEVSLSPKPGLVDRFDNGAHDDMSFMTFIDSMIALSPFFQAYIETGFAYAKEEPLLLFNRLRQLGQKAEETMFCATQGINTHKGLNFSMALLLGATGAYLARTPHLMTDLGRFSKEDTLAICRLVKPMTAHLIQTDLGHLNTKKEFTYGEQLFVTYGIKGPRGEASEGFTTLTDHALPYFRQMISQNDPETSQLRLLVYLMSIVEDGNLIHRGGIEAWKGVKADMRLLLQQDLSTTDLRLALSSYNQCLINQHLSPGGAADLLALTFYFAFLEKLL.

The protein belongs to the CitG/MdcB family.

The catalysed reaction is 3'-dephospho-CoA + ATP = 2'-(5''-triphospho-alpha-D-ribosyl)-3'-dephospho-CoA + adenine. The sequence is that of Probable 2-(5''-triphosphoribosyl)-3'-dephosphocoenzyme-A synthase from Streptococcus pyogenes serotype M3 (strain ATCC BAA-595 / MGAS315).